A 732-amino-acid chain; its full sequence is uncharacterized protein (732 aa).

Residues 163–390 (YYTINELNYL…FGIVAKKKYE (228 aa)) enclose the TR mART core domain. Active-site residues include arginine 285, serine 309, and glutamate 354.

This is an uncharacterized protein from Acanthamoeba polyphaga mimivirus (APMV).